Reading from the N-terminus, the 433-residue chain is Shikimate O-hydroxycinnamoyltransferase (433 aa).

The active-site Proton acceptor is His-153. 4-coumaroyl-CoA is bound by residues 252–255 (SSYE), 284–290 (DGRSRLR), and 370–373 (SWVR). Catalysis depends on Asp-380, which acts as the Proton acceptor.

It belongs to the plant acyltransferase family.

It carries out the reaction shikimate + 4-coumaroyl-CoA = trans-4-coumaroylshikimate + CoA. Its function is as follows. Acyltransferase involved in the biosynthesis of lignin. Accepts caffeoyl-CoA and p-coumaroyl-CoA as substrates and transfers the acyl group on both shikimate and quinate acceptors. In Arabidopsis thaliana (Mouse-ear cress), this protein is Shikimate O-hydroxycinnamoyltransferase (HST).